A 179-amino-acid chain; its full sequence is Peptide deformylase 2 (179 aa).

Fe cation is bound by residues Cys101 and His143. Glu144 is an active-site residue. His147 provides a ligand contact to Fe cation.

The protein belongs to the polypeptide deformylase family. Fe(2+) is required as a cofactor.

The enzyme catalyses N-terminal N-formyl-L-methionyl-[peptide] + H2O = N-terminal L-methionyl-[peptide] + formate. Functionally, removes the formyl group from the N-terminal Met of newly synthesized proteins. Requires at least a dipeptide for an efficient rate of reaction. N-terminal L-methionine is a prerequisite for activity but the enzyme has broad specificity at other positions. The sequence is that of Peptide deformylase 2 from Pseudomonas syringae pv. tomato (strain ATCC BAA-871 / DC3000).